Reading from the N-terminus, the 161-residue chain is uncharacterized protein (161 aa).

Positions 1 to 27 are cleaved as a signal peptide; that stretch reads MKKIGLLFMLCLAALFTIGFPAQQADA.

The protein localises to the secreted. This is an uncharacterized protein from Bacillus subtilis (strain 168).